The primary structure comprises 174 residues: ATP-dependent protease subunit HslV (174 aa).

T2 is a catalytic residue. Na(+) contacts are provided by G157, C160, and T163.

It belongs to the peptidase T1B family. HslV subfamily. As to quaternary structure, a double ring-shaped homohexamer of HslV is capped on each side by a ring-shaped HslU homohexamer. The assembly of the HslU/HslV complex is dependent on binding of ATP.

Its subcellular location is the cytoplasm. It carries out the reaction ATP-dependent cleavage of peptide bonds with broad specificity.. With respect to regulation, allosterically activated by HslU binding. Protease subunit of a proteasome-like degradation complex believed to be a general protein degrading machinery. The chain is ATP-dependent protease subunit HslV from Shewanella frigidimarina (strain NCIMB 400).